The chain runs to 284 residues: MDISDIGRKLSLDNNKLLIRKAAEIRRLCDAQFDSSIIGVGEICKAVICLEIAATRLQIIFDRQAAVKLSGMSEKAYSRSFNSLQNVIGIKIKLNVRELAVQFGCVRVIKSVQNVLSSYKERFLASLPASRRANADFTRPVFTAAAFYLCAKKQKLKVDKLRLIEVCGTSESEFSCVSTSMTDLCFDCVGISKEKKDAKDVKGNRDLLDVLPGKRRLEDGGYSSGDESSCYKRHKKMEEAKYEDWKSTVVNSIKKNPEKGTKRVIQASLNFPKKSETKELQVDS.

This sequence belongs to the ORC6 family. In terms of assembly, component of the origin recognition complex (ORC) composed of at least ORC1 (ORC1A or ORC1B), ORC2, ORC3, ORC4, ORC5 and ORC6. ORC is regulated in a cell-cycle and development dependent manner. It is sequentially assembled at the exit from anaphase of mitosis and disassembled as cells enter S phase. Interacts directly with ORC2, ORC3, ORC4 and ORC5. Follow a cell-cycle regulation with a peak at the G1/S-phase. Mostly expressed in siliques, flowers, flower buds and mature leaves, and, to a lower exent, in roots, leaves and stems.

It localises to the nucleus. In terms of biological role, component of the origin recognition complex (ORC) that binds origins of replication. DNA-binding is ATP-dependent. The specific DNA sequences that define origins of replication have not been identified yet. ORC is required to assemble the pre-replication complex necessary to initiate DNA replication. This Arabidopsis thaliana (Mouse-ear cress) protein is Origin of replication complex subunit 6.